Consider the following 108-residue polypeptide: Cell division protein FtsL (108 aa).

At 1 to 24 the chain is on the cytoplasmic side; that stretch reads MSKDTASQPSLTKLIGLDIFGVGR. A helical membrane pass occupies residues 25–45; sequence LHAILLICIFLSAIGVVLATH. The Periplasmic portion of the chain corresponds to 46–108; that stretch reads NTRQMTVQRE…PDKEVIIKLR (63 aa).

Belongs to the FtsL family. As to quaternary structure, part of a complex composed of FtsB, FtsL and FtsQ.

It is found in the cell inner membrane. Functionally, essential cell division protein. May link together the upstream cell division proteins, which are predominantly cytoplasmic, with the downstream cell division proteins, which are predominantly periplasmic. In Aliivibrio fischeri (strain ATCC 700601 / ES114) (Vibrio fischeri), this protein is Cell division protein FtsL.